Reading from the N-terminus, the 430-residue chain is Vitamin B6 salvage pathway transcriptional repressor PtsJ (430 aa).

The HTH gntR-type domain occupies 4–72 (GKTANEIFDS…GRNGTVIKGS (69 aa)). The segment at residues 32–51 (VRELASELKVNRNTVAAAYK) is a DNA-binding region (H-T-H motif). Residues 70–95 (KGSPSPVALEGGDPHTPLHDLSGGNP) form a disordered region. At Lys282 the chain carries N6-(pyridoxal phosphate)lysine.

In the C-terminal section; belongs to the class-I pyridoxal-phosphate-dependent aminotransferase family. Homodimer in both apo- and holo-forms.

Its function is as follows. Acts as a transcriptional repressor of the pdxK gene, encoding a pyridoxal kinase involved in the vitamin B6 salvage pathway. Also represses transcription of its own gene. Binds to the ptsJ-pdxK intergenic region, but does not bind pdxY and pdxH promoters. Among all six B6 vitamers, only pyridoxal 5'-phosphate (PLP) clearly binds to the protein and acts as an effector molecule for PtsJ, inducing a protein conformational change that increases affinity for DNA. Thus, PLP stabilizes protein-DNA interactions, reinforcing repression. In Salmonella typhimurium (strain LT2 / SGSC1412 / ATCC 700720), this protein is Vitamin B6 salvage pathway transcriptional repressor PtsJ.